Here is a 165-residue protein sequence, read N- to C-terminus: Ribosomal RNA large subunit methyltransferase H (165 aa).

Residue Gly109 participates in S-adenosyl-L-methionine binding.

Belongs to the RNA methyltransferase RlmH family. As to quaternary structure, homodimer.

The protein localises to the cytoplasm. It carries out the reaction pseudouridine(1915) in 23S rRNA + S-adenosyl-L-methionine = N(3)-methylpseudouridine(1915) in 23S rRNA + S-adenosyl-L-homocysteine + H(+). Specifically methylates the pseudouridine at position 1915 (m3Psi1915) in 23S rRNA. The sequence is that of Ribosomal RNA large subunit methyltransferase H from Methylorubrum populi (strain ATCC BAA-705 / NCIMB 13946 / BJ001) (Methylobacterium populi).